Reading from the N-terminus, the 235-residue chain is Phosphoribosylaminoimidazole-succinocarboxamide synthase (235 aa).

The protein belongs to the SAICAR synthetase family.

The enzyme catalyses 5-amino-1-(5-phospho-D-ribosyl)imidazole-4-carboxylate + L-aspartate + ATP = (2S)-2-[5-amino-1-(5-phospho-beta-D-ribosyl)imidazole-4-carboxamido]succinate + ADP + phosphate + 2 H(+). It functions in the pathway purine metabolism; IMP biosynthesis via de novo pathway; 5-amino-1-(5-phospho-D-ribosyl)imidazole-4-carboxamide from 5-amino-1-(5-phospho-D-ribosyl)imidazole-4-carboxylate: step 1/2. The chain is Phosphoribosylaminoimidazole-succinocarboxamide synthase from Chlorobaculum tepidum (strain ATCC 49652 / DSM 12025 / NBRC 103806 / TLS) (Chlorobium tepidum).